We begin with the raw amino-acid sequence, 641 residues long: Probable potassium transport system protein Kup (641 aa).

Over residues 1–14 the composition is skewed to polar residues; the sequence is MALDSESSASNRQG. Residues 1–20 form a disordered region; sequence MALDSESSASNRQGSRNEQD. The next 12 membrane-spanning stretches (helical) occupy residues 29–49, 69–89, 120–140, 156–176, 188–208, 236–256, 267–287, 307–327, 355–375, 384–404, 410–430, and 437–457; these read LCLTALGVVYGDIATSPLYAF, ILSLIFWALIILVSIKYLLII, VLIVLGLFGAALLYGDGMITP, PQLTSYIIPATTVILVLLFMV, FGPIMLVWFVVIALLGLNGII, VLGGVFLALTGAEALYADMGH, FALVLPALLLNYFGQGALLLL, LVGLATLATIIASQAIISGVF, VYVPAANWFMMIAAVWLVLHF, AFGIAVSGTMVITTILAFFVM, WNILTAVAVTVGFLIIDLAFF, and ITDGGWFPLAIAVFIFTLMIT.

This sequence belongs to the HAK/KUP transporter (TC 2.A.72) family.

The protein localises to the cell inner membrane. The catalysed reaction is K(+)(in) + H(+)(in) = K(+)(out) + H(+)(out). Functionally, transport of potassium into the cell. Likely operates as a K(+):H(+) symporter. The chain is Probable potassium transport system protein Kup from Nitrosomonas eutropha (strain DSM 101675 / C91 / Nm57).